The following is a 687-amino-acid chain: POZ (BTB) and AT hook-containing zinc finger 1 (687 aa).

One can recognise a BTB domain in the interval 41-130 (CDVLLRVGDE…AYTSRIVVRL (90 aa)). The segment covering 250–260 (PFPNVASSAPP) has biased composition (polar residues). Residues 250-279 (PFPNVASSAPPLTSKRGRGRPRKANLLDSM) are disordered. A C2H2-type 1 zinc finger spans residues 292 to 314 (LPCGLCGKVFTDANRLRQHEAQH). The segment at 332-351 (GENGLPISEDPDGPRKRSRT) is disordered. 5 consecutive C2H2-type zinc fingers follow at residues 355 to 377 (VACE…KLSH), 383 to 405 (YSCP…VRSH), 413 to 436 (YICQ…KQVH), 442 to 464 (HKCQ…LACH), and 495 to 517 (NFCS…VKTH). Positions 564-587 (SYGDLSDASDLKTPEKQSANGSFS) are disordered. Residues 605–628 (YPCPECGSFFRSKSYLNKHIQKVH) form a C2H2-type 7 zinc finger.

In terms of assembly, homodimer. Interacts with RNF4. Interacts (via C-terminus) with TP53; this interaction inhibits TP53 ability to activate transcription. Widely expressed at high levels during embryogenesis, especially in the central nervous system, especially to the actively proliferating neuroblasts in the periventricular neocortical neuroepithelium, in the telencephalic cortical plate and in the hippocampus. Also expressed in a stage-specific manner in the mouse germinal epithelium. While strongly expressed during brain development,m its expression turns down in adult brain.

The protein resides in the nucleus. Its function is as follows. Transcriptional regulator that plays a role in many biological processes such as embryogenesis, senescence, T-cell development or neurogenesis. Interacts with the TP53 protein to control genes that are important in proliferation and in the DNA-damage response. Mechanistically, the interaction inhibits the DNA binding and transcriptional activity of TP53/p53. Part of the transcriptional network modulating regulatory T-cell development and controls the generation of the regulatory T-cell pool under homeostatic conditions. The polypeptide is POZ (BTB) and AT hook-containing zinc finger 1 (Mus musculus (Mouse)).